A 136-amino-acid polypeptide reads, in one-letter code: Large ribosomal subunit protein uL16c (136 aa).

It belongs to the universal ribosomal protein uL16 family. In terms of assembly, part of the 50S ribosomal subunit.

It localises to the plastid. Its subcellular location is the chloroplast. In Chlamydomonas sp. (strain WXM), this protein is Large ribosomal subunit protein uL16c.